The chain runs to 359 residues: 4-dedimethylamino-4-oxo-anhydrotetracycline transaminase OxyQ (359 aa).

3 residues coordinate substrate: Gly-32, Lys-92, and Asn-155. Residues 91 to 92 (TK), Asn-155, Tyr-186, and 216 to 218 (SLS) each bind pyridoxal 5'-phosphate. An N6-(pyridoxal phosphate)lysine modification is found at Lys-219. Pyridoxal 5'-phosphate is bound at residue Arg-227. Residue Arg-341 participates in substrate binding.

It belongs to the class-I pyridoxal-phosphate-dependent aminotransferase family. It depends on pyridoxal 5'-phosphate as a cofactor.

It functions in the pathway antibiotic biosynthesis; oxytetracycline biosynthesis. Its function is as follows. Involved in the biosynthesis of the tetracycline antibiotic, oxytetracycline. Catalyzes the conversion of 4-dedimethylamino-4-oxoanhydrotetracycline to yield 4-amino-4-de(dimethylamino)anhydrotetracycline (4-amino-ATC). The sequence is that of 4-dedimethylamino-4-oxo-anhydrotetracycline transaminase OxyQ from Streptomyces rimosus.